Here is a 430-residue protein sequence, read N- to C-terminus: Elongation factor Tu (430 aa).

Residues 13 to 220 enclose the tr-type G domain; sequence RPHLNIGTIG…ACDKYIALPE (208 aa). Positions 22-29 are G1; that stretch reads GHVDHGKT. 22–29 is a binding site for GTP; that stretch reads GHVDHGKT. Position 29 (Thr29) interacts with Mg(2+). The interval 66-70 is G2; the sequence is GITIS. Residues 87–90 are G3; the sequence is DCPG. GTP-binding positions include 87 to 91 and 142 to 145; these read DCPGH and NKCD. A G4 region spans residues 142-145; that stretch reads NKCD. The tract at residues 188-190 is G5; sequence SAL.

Belongs to the TRAFAC class translation factor GTPase superfamily. Classic translation factor GTPase family. EF-Tu/EF-1A subfamily. In terms of assembly, monomer.

It is found in the cytoplasm. It carries out the reaction GTP + H2O = GDP + phosphate + H(+). Its function is as follows. GTP hydrolase that promotes the GTP-dependent binding of aminoacyl-tRNA to the A-site of ribosomes during protein biosynthesis. This chain is Elongation factor Tu, found in Neorickettsia sennetsu (strain ATCC VR-367 / Miyayama) (Ehrlichia sennetsu).